The primary structure comprises 292 residues: Protease HtpX (292 aa).

A run of 2 helical transmembrane segments spans residues 5 to 25 (VVLF…VMSV) and 35 to 55 (GLLV…LLLS). H140 is a Zn(2+) binding site. The active site involves E141. H144 serves as a coordination point for Zn(2+). Transmembrane regions (helical) follow at residues 155–175 (LLQG…GGII) and 193–213 (IIVF…AMWF). Residue E218 participates in Zn(2+) binding.

It belongs to the peptidase M48B family. The cofactor is Zn(2+).

It is found in the cell inner membrane. The protein is Protease HtpX of Xanthomonas campestris pv. campestris (strain 8004).